The sequence spans 813 residues: Raf homolog serine/threonine-protein kinase (813 aa).

The disordered stretch occupies residues 1–79 (MSRINFKKSS…GGAGTSDKEP (79 aa)). Over residues 9–23 (SSASTTPTSPHCPSP) the composition is skewed to low complexity. The 77-residue stretch at 85 to 161 (KMIMVHLPFD…PGNELWVHSE (77 aa)) folds into the RBD domain. A Phorbol-ester/DAG-type zinc finger spans residues 170-217 (KHAIVRRTFIPPKSCDVCNNPIWMMGFRCEFCQFKFHQRCSSFAPLYC). 7 residues coordinate Zn(2+): cysteine 184, cysteine 187, cysteine 198, cysteine 201, histidine 206, cysteine 209, and cysteine 217. 2 stretches are compositionally biased toward polar residues: residues 258-273 (TSGQ…SHPD) and 291-301 (SPQNETSQLSP). Disordered regions lie at residues 258 to 315 (TSGQ…SAPN), 338 to 358 (QRLE…QARH), and 383 to 472 (TPLG…PHHE). Residues 338-348 (QRLEEESRDKT) are compositionally biased toward basic and acidic residues. Residues 386–399 (GSNSPSSTCSSPPG) show a composition bias toward low complexity. The span at 406–421 (TLGQSPNVSGSTTSSL) shows a compositional bias: polar residues. The segment covering 453 to 462 (SPGERLDAQR) has biased composition (basic and acidic residues). Residues 481–748 (FIIQYKVGSG…VLERLRDIIL (268 aa)) enclose the Protein kinase domain. ATP contacts are provided by residues 487 to 495 (VGSGSFGTV) and lysine 507. Aspartate 602 functions as the Proton acceptor in the catalytic mechanism.

It belongs to the protein kinase superfamily. TKL Ser/Thr protein kinase family. RAF subfamily. As to quaternary structure, interacts with cdf-1 in a zinc-dependent manner which promotes its activity. Requires Zn(2+) as cofactor.

It carries out the reaction L-seryl-[protein] + ATP = O-phospho-L-seryl-[protein] + ADP + H(+). It catalyses the reaction L-threonyl-[protein] + ATP = O-phospho-L-threonyl-[protein] + ADP + H(+). In terms of biological role, protein kinase that participates in the induction of vulva and has roles in fertility and viability. Acts downstream of the Ras protein let-60. Required for progression of developing oocytes through the pachytene stage. Plays a role in responses to M.nematophilum-mediated bacterial infection by promoting tail swelling and preventing constipation. Positively regulates lifespan upstream of mek-2 and mpk-1. The chain is Raf homolog serine/threonine-protein kinase (lin-45) from Caenorhabditis elegans.